A 399-amino-acid chain; its full sequence is Succinate--CoA ligase [ADP-forming] subunit beta (399 aa).

An ATP-grasp domain is found at 9–254 (KAVLQPFGVS…TTEEDAKEIE (246 aa)). ATP-binding positions include Lys-46, 53 to 55 (GRG), Glu-109, Ser-112, and Glu-117. Residues Asn-209 and Asp-223 each coordinate Mg(2+). Residues Asn-274 and 331–333 (GIM) each bind substrate.

The protein belongs to the succinate/malate CoA ligase beta subunit family. In terms of assembly, heterotetramer of two alpha and two beta subunits. It depends on Mg(2+) as a cofactor.

It carries out the reaction succinate + ATP + CoA = succinyl-CoA + ADP + phosphate. It catalyses the reaction GTP + succinate + CoA = succinyl-CoA + GDP + phosphate. It participates in carbohydrate metabolism; tricarboxylic acid cycle; succinate from succinyl-CoA (ligase route): step 1/1. Its function is as follows. Succinyl-CoA synthetase functions in the citric acid cycle (TCA), coupling the hydrolysis of succinyl-CoA to the synthesis of either ATP or GTP and thus represents the only step of substrate-level phosphorylation in the TCA. The beta subunit provides nucleotide specificity of the enzyme and binds the substrate succinate, while the binding sites for coenzyme A and phosphate are found in the alpha subunit. The protein is Succinate--CoA ligase [ADP-forming] subunit beta of Rhodopseudomonas palustris (strain BisA53).